A 90-amino-acid polypeptide reads, in one-letter code: uncharacterized protein (90 aa).

A helical transmembrane segment spans residues 69–89; the sequence is LLYIFLGAMIVIIFLVIKNQL.

This sequence belongs to the IIV-6 466R family.

It localises to the membrane. This is an uncharacterized protein from Invertebrate iridescent virus 6 (IIV-6).